The sequence spans 160 residues: MSAKKIVLKSSDGESFEVEEAVALESQTIAHMVEDDCVDNGVPLPNVTSKILAKVIEYCKRHVEAAASKAEAVEGAATSDDDLKAWDADFMKIDQATLFELILAANYLNIKNLLDLTCQTVADMIKGKTPEEIRTTFNIKNDFTPEEEEEVRRENQWAFE.

The tract at residues 102–160 is interaction with the F-box domain of F-box proteins; the sequence is ILAANYLNIKNLLDLTCQTVADMIKGKTPEEIRTTFNIKNDFTPEEEEEVRRENQWAFE.

This sequence belongs to the SKP1 family. As to quaternary structure, part of a SCF E3 ubiquitin ligase complex composed of SKP1, CUL1, RBX1 (RBX1A or RBX1B) and F-box proteins. Interacts with SKIP1, SKIP2, SKIP3, SKIP4, SKIP6, FIB1/SKIP7, SKIP8, PP2A11/SKIP10, SKIP11, PP2B11/SKIP12, PP2A14/SKIP13, SKIP14, SKIP15, SKIP16, SKIP19/FBL20, SKIP20, PP2B1/SKIP21, SKIP22, SKIP23, SKIP24, SKIP25, TULP10/SKIP26, SKIP27, SKIP28/MEE11, AFR/SKIP29, SKIP30, SKIP31, SKIP32/FBP7, SKIP33, SKIP35, ADO1/ZTL, ADO2/LKP2, ADO3/FKF1, AFR, COI1, DOR, EBF1, EBF2, EID1, ORE9, PP2A13/SKIP9, TIR1, UFO, SKP2A, CPR1/CPR30, FBL17, NUP58, At1g55000, At1g67340, At1g78100, At3g04660, At3g61590, At4g38940 and At5g49610. The SKP1A subunit of the SCF E3 ubiquitin ligase complex can interact directly with KIN10, KIN11 and the proteasome subunit PAD1. This interaction can be disrupted by PRL1. In case of polerovirus infection, part of a SCF P0 complex composed of the viral silencing suppressor P0, SKP1 and CUL1. Interacts with turnip yellows virus P0. Interacts with VBF and Agrobacterium virF. Binds to KIB1. In terms of tissue distribution, accumulates only in meristematic cells. Expressed in inflorescence, shoot and root apical meristems, as well as in developing organs such as gametocytes and seeds. Also detected in cortical layer and epidermis of roots, leaves, pith and vascular bundle of young stem, young floral buds and organ primordia, pollen and through the valve of siliques. Not detectable in mature root tissues.

The protein localises to the nucleus. It localises to the cytoplasm. The protein resides in the cytoskeleton. It is found in the spindle. Its subcellular location is the phragmoplast. It functions in the pathway protein modification; protein ubiquitination. Involved in ubiquitination and subsequent proteasomal degradation of target proteins. Together with CUL1, RBX1 and a F-box protein, it forms a SCF E3 ubiquitin ligase complex. The functional specificity of this complex depends on the type of F-box protein. In the SCF complex, it serves as an adapter that links the F-box protein to CUL1. SCF(UFO) is required for vegetative and floral organ development as well as for male gametogenesis. SCF(TIR1) is involved in auxin signaling pathway. SCF(COI1) regulates responses to jasmonates. SCF(EID1) and SCF(AFR) are implicated in phytochrome A light signaling. SCF(ADO1), SCF(ADO2), SCF(ADO3) are related to the circadian clock. SCF(ORE9) seems to be involved in senescence. SCF(EBF1/EBF2) may regulate ethylene signaling. Plays a role during embryogenesis and early postembryonic development, especially during cell elongation and division. Contributes to the correct chromosome segregation during tetrad formation. The sequence is that of SKP1-like protein 1A from Arabidopsis thaliana (Mouse-ear cress).